Here is a 79-residue protein sequence, read N- to C-terminus: Acyl carrier protein (79 aa).

In terms of domain architecture, Carrier spans 2–77 (SDIEARVKKI…NAIDYANTHH (76 aa)). At serine 37 the chain carries O-(pantetheine 4'-phosphoryl)serine.

The protein belongs to the acyl carrier protein (ACP) family. 4'-phosphopantetheine is transferred from CoA to a specific serine of apo-ACP by AcpS. This modification is essential for activity because fatty acids are bound in thioester linkage to the sulfhydryl of the prosthetic group.

Its subcellular location is the cytoplasm. Its pathway is lipid metabolism; fatty acid biosynthesis. Its function is as follows. Carrier of the growing fatty acid chain in fatty acid biosynthesis. This Polaromonas naphthalenivorans (strain CJ2) protein is Acyl carrier protein.